The chain runs to 135 residues: Transcriptional activator protein (135 aa).

A Nuclear localization signal motif is present at residues 17–32 (KVQHRAAKRKRIRRKR). Residues 37-54 (CGCSYYVHINCHNHGFTH) fold into a zinc finger. The interval 77–115 (LFQDHSTRQQTVRNEPGHNNRPDTVQPQPEESVGTTSML) is disordered. Residues 98-114 (PDTVQPQPEESVGTTSM) show a composition bias toward polar residues. Positions 120-135 (GLDDLTASDLAFLEGI) are transactivation.

Belongs to the geminiviridae transcriptional activator protein family. Monomer. Homodimer. Homooligomer. Self-interaction correlates with nuclear localization and efficient activation of transcription. Monomers suppress local silencing by interacting with and inactivating host adenosine kinase 2 (ADK2) in the cytoplasm. Interacts with and inhibits host SNF1 kinase. Binds to ssDNA. Post-translationally, phosphorylated.

It is found in the host nucleus. The protein resides in the host cytoplasm. In terms of biological role, strong activator of the late viral genes promoters. Enhances the expression of the capsid protein and nuclear shuttle protein. Acts as a suppressor of RNA-mediated gene silencing, also known as post-transcriptional gene silencing (PTGS), a mechanism of plant viral defense that limits the accumulation of viral RNAs. Suppresses the host RNA silencing by inhibiting adenosine kinase 2 (ADK2), a kinase involved in a general methylation pathway. Also suppresses the host basal defense by interacting with and inhibiting SNF1 kinase, a key regulator of cell metabolism implicated in innate antiviral defense. Determines pathogenicity. The polypeptide is Transcriptional activator protein (Indian cassava mosaic virus (ICMV)).